A 507-amino-acid chain; its full sequence is Fumarate hydratase, mitochondrial (507 aa).

The N-terminal 41 residues, 1 to 41 (MYRALRLLARSRRLLRVPSAGAAVSGEATTLPRCAPNVARM), are a transit peptide targeting the mitochondrion. N6-acetyllysine; alternate occurs at positions 58, 63, and 77. N6-succinyllysine; alternate occurs at positions 58, 63, and 77. At Thr-82 the chain carries Phosphothreonine. N6-acetyllysine; alternate is present on residues Lys-112 and Lys-119. Residues Lys-112 and Lys-119 each carry the N6-succinyllysine; alternate modification. Substrate is bound by residues 142–144 (SGT), 173–176 (HPND), and 183–185 (SSN). Lys-210 bears the N6-acetyllysine mark. The residue at position 220 (Lys-220) is an N6-acetyllysine; alternate. Lys-220 is modified (N6-succinyllysine; alternate). Residue Thr-231 participates in substrate binding. His-232 (proton donor/acceptor) is an active-site residue. Phosphothreonine is present on Thr-233. Lys-289 is subject to N6-acetyllysine; alternate. An N6-succinyllysine; alternate modification is found at Lys-289. The active site involves Ser-362. Substrate is bound by residues Ser-363 and 368–370 (KVN). Ser-363 carries the post-translational modification Phosphoserine. N6-succinyllysine is present on residues Lys-464 and Lys-470. N6-acetyllysine is present on Lys-499.

Belongs to the class-II fumarase/aspartase family. Fumarase subfamily. Homotetramer. Interacts with H2AZ1. Phosphorylation at Thr-233 by PRKDC in response to DNA damage promotes translocation to the nucleus and recruitment to DNA double-strand breaks (DSBs).

The protein resides in the mitochondrion. The protein localises to the cytoplasm. It is found in the cytosol. Its subcellular location is the nucleus. It localises to the chromosome. The catalysed reaction is (S)-malate = fumarate + H2O. It participates in carbohydrate metabolism; tricarboxylic acid cycle; (S)-malate from fumarate: step 1/1. Functionally, catalyzes the reversible stereospecific interconversion of fumarate to L-malate. Experiments in different species have demonstrated that specific isoforms of this protein act in defined pathways and favor one direction over the other. In terms of biological role, catalyzes the hydration of fumarate to L-malate in the tricarboxylic acid (TCA) cycle to facilitate a transition step in the production of energy in the form of NADH. Catalyzes the dehydration of L-malate to fumarate. Fumarate metabolism in the cytosol plays a role during urea cycle and arginine metabolism; fumarate being a by-product of the urea cycle and amino-acid catabolism. Also plays a role in DNA repair by promoting non-homologous end-joining (NHEJ). In response to DNA damage and phosphorylation by PRKDC, translocates to the nucleus and accumulates at DNA double-strand breaks (DSBs): acts by catalyzing formation of fumarate, an inhibitor of KDM2B histone demethylase activity, resulting in enhanced dimethylation of histone H3 'Lys-36' (H3K36me2). This Mus musculus (Mouse) protein is Fumarate hydratase, mitochondrial.